Consider the following 132-residue polypeptide: Small ribosomal subunit protein uS8 (132 aa).

Belongs to the universal ribosomal protein uS8 family. As to quaternary structure, part of the 30S ribosomal subunit. Contacts proteins S5 and S12.

Its function is as follows. One of the primary rRNA binding proteins, it binds directly to 16S rRNA central domain where it helps coordinate assembly of the platform of the 30S subunit. In Anaeromyxobacter dehalogenans (strain 2CP-1 / ATCC BAA-258), this protein is Small ribosomal subunit protein uS8.